The sequence spans 506 residues: Maturase K (506 aa).

This sequence belongs to the intron maturase 2 family. MatK subfamily.

Its subcellular location is the plastid. It localises to the chloroplast. Usually encoded in the trnK tRNA gene intron. Probably assists in splicing its own and other chloroplast group II introns. The chain is Maturase K from Trifolium hirtum (Rose clover).